The primary structure comprises 189 residues: MTSILRSPQALQLTLALIKPDAVAHPLILEAVHQQILSNKFLIVRTRELQWKLEDCRRFYREHEGRFFYQRLVEFMTSGPIRAYILAHKDAIQLWRTLMGPTRVFRARYIAPDSIRGSLGLTDTRNTTHGSDSVVSASREIAAFFPDFSEQRWYEEEEPQLRCGPVHYSPEEGIHCAAETGGHKQPNKT.

Residues K19, F68, R96, T102, R116, and N126 each contribute to the ATP site. H129 serves as the catalytic Pros-phosphohistidine intermediate.

The protein belongs to the NDK family. Mg(2+) is required as a cofactor.

The catalysed reaction is a 2'-deoxyribonucleoside 5'-diphosphate + ATP = a 2'-deoxyribonucleoside 5'-triphosphate + ADP. It catalyses the reaction a ribonucleoside 5'-diphosphate + ATP = a ribonucleoside 5'-triphosphate + ADP. Functionally, major role in the synthesis of nucleoside triphosphates other than ATP. The ATP gamma phosphate is transferred to the NDP beta phosphate via a ping-pong mechanism, using a phosphorylated active-site intermediate. This Mus musculus (Mouse) protein is Nucleoside diphosphate kinase 6 (Nme6).